The sequence spans 761 residues: DNA topoisomerase 1 (761 aa).

A Toprim domain is found at 6-143 (TALIICEKPS…KRMRFSSLTK (138 aa)). Residues Glu12 and Asp111 each contribute to the Mg(2+) site. Residues 157–569 (DYGLVDAGES…EAEKRLRKIL (413 aa)) enclose the Topo IA-type catalytic domain. The segment at 196-201 (SVGRVQ) is interaction with DNA. Tyr315 (O-(5'-phospho-DNA)-tyrosine intermediate) is an active-site residue. 3 consecutive C4-type zinc fingers follow at residues 600-626 (CPKC…YPEC), 680-706 (CPKC…YPKC), and 721-747 (CPKC…YPKC).

The protein belongs to the type IA topoisomerase family. Monomer. Mg(2+) serves as cofactor.

It catalyses the reaction ATP-independent breakage of single-stranded DNA, followed by passage and rejoining.. In terms of biological role, releases the supercoiling and torsional tension of DNA, which is introduced during the DNA replication and transcription, by transiently cleaving and rejoining one strand of the DNA duplex. Introduces a single-strand break via transesterification at a target site in duplex DNA. The scissile phosphodiester is attacked by the catalytic tyrosine of the enzyme, resulting in the formation of a DNA-(5'-phosphotyrosyl)-enzyme intermediate and the expulsion of a 3'-OH DNA strand. The free DNA strand then undergoes passage around the unbroken strand, thus removing DNA supercoils. Finally, in the religation step, the DNA 3'-OH attacks the covalent intermediate to expel the active-site tyrosine and restore the DNA phosphodiester backbone. The protein is DNA topoisomerase 1 of Methanocaldococcus jannaschii (strain ATCC 43067 / DSM 2661 / JAL-1 / JCM 10045 / NBRC 100440) (Methanococcus jannaschii).